Reading from the N-terminus, the 1456-residue chain is ABC transporter G family member 44 (1456 aa).

Residues 169–442 (ANLLHVVPNK…FESMGFKCPD (274 aa)) form the ABC transporter 1 domain. 202-209 (GPPGSGKT) is an ATP binding site. Residues 520–733 (ELLRTCIARE…AMNAIAVNEF (214 aa)) form the ABC transmembrane type-2 1 domain. Helical transmembrane passes span 538–558 (FVYR…MTLF), 571–591 (GIVY…NGFS), 626–646 (IPIS…VIGF), 658–678 (LLLL…AALG), 682–702 (VVAN…SGFI), and 768–788 (IGVG…TIAL). The disordered stretch occupies residues 812–844 (NITGETINDPRNSASSGQTTNTRRNAAPGEASE). The span at 814–835 (TGETINDPRNSASSGQTTNTRR) shows a compositional bias: polar residues. An ABC transporter 2 domain is found at 858–1110 (VAFNNIRYSV…DLIEYFEGVE (253 aa)). Residue 903-910 (GVSGAGKT) participates in ATP binding. Residues 1183–1397 (TQCMACLWKQ…TLYGLVASQF (215 aa)) form the ABC transmembrane type-2 2 domain. A run of 7 helical transmembrane segments spans residues 1202 to 1222 (YTVV…TIFW), 1242 to 1262 (YAAV…VVAV), 1290 to 1310 (LPYV…MIGF), 1317 to 1337 (FFWY…YGML), 1347 to 1367 (IASI…GFVI), 1378 to 1398 (WYSW…SQFG), and 1425 to 1445 (FLGV…VSFS).

This sequence belongs to the ABC transporter superfamily. ABCG family. PDR (TC 3.A.1.205) subfamily.

Its subcellular location is the membrane. Functionally, may be a general defense protein. The protein is ABC transporter G family member 44 of Oryza sativa subsp. japonica (Rice).